Consider the following 884-residue polypeptide: Pyruvate, phosphate dikinase (884 aa).

The segment at M1–K351 is N-terminal. R99 lines the ATP pocket. The interval R352–S408 is linker 1. The tract at residues P409–I507 is central. Phosphothreonine; by PDRP1 is present on T462. H464 (tele-phosphohistidine intermediate) is an active-site residue. The linker 2 stretch occupies residues N508 to V542. The segment at L543–Q884 is C-terminal. Substrate contacts are provided by R570, R626, E753, G774, T775, N776, and D777. A Mg(2+)-binding site is contributed by E753. Residue D777 participates in Mg(2+) binding. C839 functions as the Proton donor in the catalytic mechanism.

The protein belongs to the PEP-utilizing enzyme family. In terms of assembly, homodimer. Mg(2+) serves as cofactor. In terms of processing, phosphorylation of Thr-462 in the dark inactivates the enzyme. Dephosphorylation upon light stimulation reactivates the enzyme.

The catalysed reaction is pyruvate + phosphate + ATP = phosphoenolpyruvate + AMP + diphosphate + H(+). Its activity is regulated as follows. Activated by light-induced dephosphorylation. Inhibited by dark-induced phosphorylation. Both reactions are catalyzed by PDRP1. Functionally, catalyzes the reversible phosphorylation of pyruvate and phosphate. The sequence is that of Pyruvate, phosphate dikinase from Giardia intestinalis (Giardia lamblia).